Here is a 20-residue protein sequence, read N- to C-terminus: Elastase (20 aa).

The Peptidase S1 domain occupies V1–Y20.

The protein belongs to the peptidase S1 family. Elastase subfamily.

Digests most rapidly at the C-terminal side of alanine residues, but also cleaves at valine and leucine residues. The sequence is that of Elastase from Gadus morhua (Atlantic cod).